A 197-amino-acid chain; its full sequence is uncharacterized protein (197 aa).

A run of 4 helical transmembrane segments spans residues 30–50 (WVAMGATAITVLAGAHIVEMA), 61–81 (LVAGASVVFWAFGPWLIPPLV), 101–121 (LWSVVFPLGMYGVGAYRLGLA), and 130–150 (IGEFEGWVALAVWTITFVAML).

It localises to the cell membrane. This is an uncharacterized protein from Mycobacterium tuberculosis (strain CDC 1551 / Oshkosh).